Reading from the N-terminus, the 21-residue chain is Dahlein-5.4 (21 aa).

As to expression, expressed by the skin dorsal glands.

It localises to the secreted. In terms of biological role, has no antimicrobial activity. Strongly inhibits the formation of NO by neuronal nitric oxide synthase at micromolar concentrations. The chain is Dahlein-5.4 from Ranoidea dahlii (Dahl's aquatic frog).